The chain runs to 363 residues: Cobalt-precorrin-5B C(1)-methyltransferase (363 aa).

The protein belongs to the CbiD family.

It catalyses the reaction Co-precorrin-5B + S-adenosyl-L-methionine = Co-precorrin-6A + S-adenosyl-L-homocysteine. It functions in the pathway cofactor biosynthesis; adenosylcobalamin biosynthesis; cob(II)yrinate a,c-diamide from sirohydrochlorin (anaerobic route): step 6/10. Functionally, catalyzes the methylation of C-1 in cobalt-precorrin-5B to form cobalt-precorrin-6A. In Treponema denticola (strain ATCC 35405 / DSM 14222 / CIP 103919 / JCM 8153 / KCTC 15104), this protein is Cobalt-precorrin-5B C(1)-methyltransferase.